A 667-amino-acid polypeptide reads, in one-letter code: DNA ligase (667 aa).

Residues 32-36 (DSEYD), 81-82 (SL), and Glu-110 contribute to the NAD(+) site. The active-site N6-AMP-lysine intermediate is the Lys-112. NAD(+)-binding residues include Arg-133, Glu-167, Lys-283, and Lys-307. The Zn(2+) site is built by Cys-401, Cys-404, Cys-419, and Cys-424. The region spanning 586–667 (EGHPEFSGKT…FVDKQNELNS (82 aa)) is the BRCT domain.

This sequence belongs to the NAD-dependent DNA ligase family. LigA subfamily. Mg(2+) serves as cofactor. Requires Mn(2+) as cofactor.

The enzyme catalyses NAD(+) + (deoxyribonucleotide)n-3'-hydroxyl + 5'-phospho-(deoxyribonucleotide)m = (deoxyribonucleotide)n+m + AMP + beta-nicotinamide D-nucleotide.. In terms of biological role, DNA ligase that catalyzes the formation of phosphodiester linkages between 5'-phosphoryl and 3'-hydroxyl groups in double-stranded DNA using NAD as a coenzyme and as the energy source for the reaction. It is essential for DNA replication and repair of damaged DNA. The polypeptide is DNA ligase (Staphylococcus aureus (strain MRSA252)).